Here is a 309-residue protein sequence, read N- to C-terminus: Metal ABC transporter substrate-binding lipoprotein FimA (309 aa).

Residues 1–20 (MKKIASVLALFVALLFGLLA) form the signal peptide. Cys-21 carries the N-palmitoyl cysteine lipid modification. A lipid anchor (S-diacylglycerol cysteine) is attached at Cys-21. 4 residues coordinate a divalent metal cation: His-67, His-139, Glu-205, and Asp-280.

The protein belongs to the bacterial solute-binding protein 9 family. Lipoprotein receptor antigen (Lrai) subfamily.

The protein localises to the cell membrane. Part of an ATP-binding cassette (ABC) transport system involved in metal import. Binds a metal with high affinity and specificity and delivers it to the membrane permease for translocation into the cytoplasm. Also acts as an adhesin which is involved on adherence to extracellular matrix. It is an important factor in pathogenesis and infection. May contribute to the formation and accumulation of dental plaque. The chain is Metal ABC transporter substrate-binding lipoprotein FimA (fimA) from Streptococcus parasanguinis.